Consider the following 175-residue polypeptide: MHSYIDLLNIGASVGGLRWPDMLVQLFFFLILLALLKKFAWGPLMSKMEERENYVANEIESAEQSRAEAEKASKDAAEQLNQVKAEAQKMIEDAKAAGAKQEQAIIDSAREEADRIKEAAQADIQNEKERAIQALQDKVASLSVLIASKVIEKELSEQDQEKLINEYIQEVGEDR.

A helical transmembrane segment spans residues 22 to 44; the sequence is MLVQLFFFLILLALLKKFAWGPL.

The protein belongs to the ATPase B chain family. In terms of assembly, F-type ATPases have 2 components, F(1) - the catalytic core - and F(0) - the membrane proton channel. F(1) has five subunits: alpha(3), beta(3), gamma(1), delta(1), epsilon(1). F(0) has three main subunits: a(1), b(2) and c(10-14). The alpha and beta chains form an alternating ring which encloses part of the gamma chain. F(1) is attached to F(0) by a central stalk formed by the gamma and epsilon chains, while a peripheral stalk is formed by the delta and b chains.

The protein resides in the cell membrane. Functionally, f(1)F(0) ATP synthase produces ATP from ADP in the presence of a proton or sodium gradient. F-type ATPases consist of two structural domains, F(1) containing the extramembraneous catalytic core and F(0) containing the membrane proton channel, linked together by a central stalk and a peripheral stalk. During catalysis, ATP synthesis in the catalytic domain of F(1) is coupled via a rotary mechanism of the central stalk subunits to proton translocation. Component of the F(0) channel, it forms part of the peripheral stalk, linking F(1) to F(0). The chain is ATP synthase subunit b from Oceanobacillus iheyensis (strain DSM 14371 / CIP 107618 / JCM 11309 / KCTC 3954 / HTE831).